The following is a 155-amino-acid chain: Endoribonuclease YbeY (155 aa).

Zn(2+) contacts are provided by His-114, His-118, and His-124.

It belongs to the endoribonuclease YbeY family. Requires Zn(2+) as cofactor.

The protein localises to the cytoplasm. Single strand-specific metallo-endoribonuclease involved in late-stage 70S ribosome quality control and in maturation of the 3' terminus of the 16S rRNA. The polypeptide is Endoribonuclease YbeY (Salmonella arizonae (strain ATCC BAA-731 / CDC346-86 / RSK2980)).